A 247-amino-acid polypeptide reads, in one-letter code: Probable transcriptional regulatory protein Swit_2142 (247 aa).

The span at methionine 1 to lysine 14 shows a compositional bias: basic residues. The interval methionine 1–arginine 21 is disordered.

Belongs to the TACO1 family.

It localises to the cytoplasm. This is Probable transcriptional regulatory protein Swit_2142 from Rhizorhabdus wittichii (strain DSM 6014 / CCUG 31198 / JCM 15750 / NBRC 105917 / EY 4224 / RW1) (Sphingomonas wittichii).